A 433-amino-acid chain; its full sequence is Schlafen-like protein 2 (433 aa).

The 168-residue stretch at 1 to 168 (MADTSPRESK…LSVNFGSQPF (168 aa)) folds into the B30.2/SPRY domain. The tract at residues 199-400 (EHVVVKLPFA…RRMASNKCVY (202 aa)) is SLFN-like fold. Active-site residues include Glu211 and Glu216.

Belongs to the Schlafen family. Component of the trimeric PUCH (precursor of 21U RNA 5'-end cleavage holoenzyme) complex; consisting of tofu-1, tofu-2 and either slfl-3 or slfl-4. Within the complex, interacts (via N-terminus) with tofu-1 (via N-terminus); the interaction stabilizes tofu-2 and may form a functional nuclease. Within the complex, interacts (via N-terminus) with slfl-3 (via N-terminus); the presence of tofu-1 is required for this interaction. Mg(2+) serves as cofactor. Expressed in the germline.

It is found in the cytoplasm. The protein localises to the mitochondrion. Its activity is regulated as follows. Inhibited by ethylenediaminetetraacetic acid (EDTA). In terms of biological role, component of the trimeric PUCH (precursor of 21U RNA 5'-end cleavage holoenzyme) complex, that acts as an endoribonuclease processing the 5'-end of precursor Piwi-interacting RNAs (piRNAs). The PUCH complex consists of tofu-1, tofu-2 and either slfl-3 or slfl-4, with tofu-2 exhibiting endoribonuclease activity. PUCH-mediated processing strictly requires a 7-methyl-G cap (m7 G-cap) and an uracil at position three (U3). PUCH also exhibits a strict bias for piRNA precursors with an A or G at position 1. Mature piRNA production is enhanced by the interaction of PUCH with the PETISCO complex, which is stabilizing piRNA precursors and allows their processing by PUCH. This Caenorhabditis elegans protein is Schlafen-like protein 2.